The primary structure comprises 910 residues: Constitutive coactivator of peroxisome proliferator-activated receptor gamma (910 aa).

Disordered regions lie at residues 333–416 (SDAE…VPMC), 443–483 (SEPR…ESRQ), and 863–910 (SHHA…WRRY). Basic and acidic residues-rich tracts occupy residues 335–351 (AESR…ESRQ), 360–375 (ESRR…EPRQ), and 396–411 (ESRR…EPRQ). A compositionally biased stretch (polar residues) spans 872 to 890 (QGSSYHRTGSGYSRSSQGQ). At R885 the chain carries Omega-N-methylarginine. Residues 901–910 (QYEHDQWRRY) show a composition bias toward basic and acidic residues.

The protein belongs to the constitutive coactivator of PPAR-gamma family. In terms of assembly, interacts with ESR1 and RXRA. Interacts with PPARG; in a ligand-independent manner. Widely expressed.

The protein resides in the nucleus. Its function is as follows. Functions as a transactivator of PPARG and ESR1. Functions in adipogenesis through PPARG activation. This is Constitutive coactivator of peroxisome proliferator-activated receptor gamma (FAM120B) from Homo sapiens (Human).